We begin with the raw amino-acid sequence, 77 residues long: Large ribosomal subunit protein bL28 (77 aa).

The segment at 1 to 25 (MARVCQVTGKAPMSGNNVSHANNKT) is disordered.

This sequence belongs to the bacterial ribosomal protein bL28 family.

This Paraburkholderia phytofirmans (strain DSM 17436 / LMG 22146 / PsJN) (Burkholderia phytofirmans) protein is Large ribosomal subunit protein bL28.